The primary structure comprises 207 residues: Small ribosomal subunit protein uS4c (207 aa).

The region spanning Met-92 to Glu-156 is the S4 RNA-binding domain.

It belongs to the universal ribosomal protein uS4 family. Part of the 30S ribosomal subunit. Contacts protein S5. The interaction surface between S4 and S5 is involved in control of translational fidelity.

The protein localises to the plastid. It localises to the chloroplast. In terms of biological role, one of the primary rRNA binding proteins, it binds directly to 16S rRNA where it nucleates assembly of the body of the 30S subunit. Functionally, with S5 and S12 plays an important role in translational accuracy. The protein is Small ribosomal subunit protein uS4c (rps4) of Equisetum pratense (Meadow horsetail).